The sequence spans 192 residues: uncharacterized protein (192 aa).

Residues 17–73 (MLRGSGKKPIQRLAKAPAATASSKTSEWRATTAYGFLPAGGDVRPHSPRYESQGVLS) form a disordered region. Residues 30 to 41 (AKAPAATASSKT) are compositionally biased toward low complexity.

This is an uncharacterized protein from Sinorhizobium fredii (strain NBRC 101917 / NGR234).